Here is a 647-residue protein sequence, read N- to C-terminus: MESKCLMFVSIVSVFFMVVNGVSETETLLKFKNSLVIGRANALESWNRRNPPCKWTGVLCDRGFVWGLRLENLELSGSIDIEALMGLNSLRSLSFINNKFKGPFPEFKKLVALKSLYLSNNQFDLEIPKDAFDGMGWLKKLHLEQNNFIGEIPTSLVKSPKLIELRLDGNRFTGQIPEFRHHPNMLNLSNNALAGQIPNSFSTMDPKLFEGNKGLCGKPLDTKCSSPYNHSSEPKSSTKKTSSKFLYIVAAAVAALAASLIIIGVVIFLIRRRKKKQPLLSAEPGPSSLQMRAGIQESERGQGSYHSQNRAAKKMIHTTKLSFLRDDKGKFELQDLLKASAEILGSGCFGASYKTLLSNGSVMVVKRFKHMNSAGIDEFQEHMKRLGRLNHENLLPIVAYYYKKEEKLFVSDFVANGSLAAHLHGHKSLGQPSLDWPTRFNIVKGVGRGLLYLHKNLPSLMAPHGHLKSSNVLLSEKFEPLLMDYGLIPMINEESAQELMVAYKSPEYVKQSRVTKKTDVWGLGVLILEILTGKLLESFSQVDKESEEDLASWVRSSFKGEWTQELFDQEMGKTSNCEAHILNLMRIGLSCCEVDVEKRLDIREAVEKMEDLMKEREQGDDDFYSTYASEADGRSSRGLSSEGINLS.

The signal sequence occupies residues 1-21; sequence MESKCLMFVSIVSVFFMVVNG. LRR repeat units follow at residues 87–109, 110–134, 136–159, 161–183, and 185–203; these read LNSL…EFKK, LVAL…AFDG, GWLK…LVKS, KLIE…RHHP, and MLNL…SFST. Residues 248–268 form a helical membrane-spanning segment; that stretch reads IVAAAVAALAASLIIIGVVIF. The region spanning 338 to 613 is the Protein kinase domain; it reads KASAEILGSG…EAVEKMEDLM (276 aa). Ser340 bears the Phosphoserine mark. Residues 344-352 and Lys366 each bind ATP; that span reads LGSGCFGAS. Ser418 is modified (phosphoserine). Thr438 carries the phosphothreonine modification. A Phosphotyrosine modification is found at Tyr508. The segment at 620-647 is disordered; that stretch reads DDDFYSTYASEADGRSSRGLSSEGINLS. The span at 637–647 shows a compositional bias: polar residues; sequence RGLSSEGINLS.

Belongs to the protein kinase superfamily. Ser/Thr protein kinase family. Part of a complex containing ROPGEF1 and ARAC11/ROP1. The interaction between PRK2, ROPGEF1 and ARAC11/ROP1 is phosphorylation-independent. Interacts with ROPGEF12 (via C-terminus). Interacts with ROPGEF1 (via PRONE domain). As to expression, expressed in pollen and/or in flowers, but not in leaves. Expressed in pollen tube.

The protein localises to the cell membrane. It catalyses the reaction L-seryl-[protein] + ATP = O-phospho-L-seryl-[protein] + ADP + H(+). It carries out the reaction L-threonyl-[protein] + ATP = O-phospho-L-threonyl-[protein] + ADP + H(+). With respect to regulation, the phosphorylation activity is calcium-independent. Functionally, receptor-like kinase involved in the control of pollen germination and pollen tube polar growth. Phosphorylates ROPGEF1 in its C-terminal region, releasing its auto-inhibition, and thereby activating the ROP1 signaling pathway. May act as a scaffolding protein, recruiting ROPGEF12 to the plasma membrane by binding to its C-terminal domain. Phosphorylates ROPGEF12, releasing its auto-inhibition. This Arabidopsis thaliana (Mouse-ear cress) protein is Pollen receptor-like kinase 2.